A 237-amino-acid polypeptide reads, in one-letter code: Ribonuclease PH (237 aa).

Phosphate contacts are provided by residues Arg-86 and 124–126; that span reads GTR.

It belongs to the RNase PH family. As to quaternary structure, homohexameric ring arranged as a trimer of dimers.

It catalyses the reaction tRNA(n+1) + phosphate = tRNA(n) + a ribonucleoside 5'-diphosphate. Functionally, phosphorolytic 3'-5' exoribonuclease that plays an important role in tRNA 3'-end maturation. Removes nucleotide residues following the 3'-CCA terminus of tRNAs; can also add nucleotides to the ends of RNA molecules by using nucleoside diphosphates as substrates, but this may not be physiologically important. Probably plays a role in initiation of 16S rRNA degradation (leading to ribosome degradation) during starvation. The chain is Ribonuclease PH from Alteromonas mediterranea (strain DSM 17117 / CIP 110805 / LMG 28347 / Deep ecotype).